The sequence spans 249 residues: Pyridoxine 5'-phosphate synthase (249 aa).

Asparagine 12 provides a ligand contact to 3-amino-2-oxopropyl phosphate. 14–15 contacts 1-deoxy-D-xylulose 5-phosphate; that stretch reads DH. Arginine 23 serves as a coordination point for 3-amino-2-oxopropyl phosphate. Catalysis depends on histidine 48, which acts as the Proton acceptor. 1-deoxy-D-xylulose 5-phosphate is bound by residues arginine 50 and histidine 55. Glutamate 75 serves as the catalytic Proton acceptor. Residue threonine 105 coordinates 1-deoxy-D-xylulose 5-phosphate. The active-site Proton donor is histidine 199. Residues glycine 200 and 221 to 222 each bind 3-amino-2-oxopropyl phosphate; that span reads GH.

The protein belongs to the PNP synthase family. In terms of assembly, homooctamer; tetramer of dimers.

The protein resides in the cytoplasm. It catalyses the reaction 3-amino-2-oxopropyl phosphate + 1-deoxy-D-xylulose 5-phosphate = pyridoxine 5'-phosphate + phosphate + 2 H2O + H(+). Its pathway is cofactor biosynthesis; pyridoxine 5'-phosphate biosynthesis; pyridoxine 5'-phosphate from D-erythrose 4-phosphate: step 5/5. Its function is as follows. Catalyzes the complicated ring closure reaction between the two acyclic compounds 1-deoxy-D-xylulose-5-phosphate (DXP) and 3-amino-2-oxopropyl phosphate (1-amino-acetone-3-phosphate or AAP) to form pyridoxine 5'-phosphate (PNP) and inorganic phosphate. This is Pyridoxine 5'-phosphate synthase from Roseobacter denitrificans (strain ATCC 33942 / OCh 114) (Erythrobacter sp. (strain OCh 114)).